We begin with the raw amino-acid sequence, 368 residues long: MKWHRGRLTQTLGAMGLTATLTVAAQAAGQGDMLDLAPMPPAKAGNPAMIELGKQFFFDRRLSGDWGVSCASCHDPAKGWGDGLALSKGYPSMEYFRNSPTVLNAAHRKRFLWDGRLDGADPGTLARDMITEAHTMNMDGRLMQERLQQVPEYAALWQKWRNDDINGMRVFNAVGEFITSLETRNAPFDDFAKGDSTAITKEAQHGYALFKGKAGCVSCHNGPIGSDGKLHKTGVPEHPDVLNNPLRTITMLRHYATSGMPNYMSARSDVGAYAISKDERDVGKFQTAQLRDLKYTAPYMHNGVFDTLEEVVAFYNQGGGEGSALSPLTLSTAEQQALVAFLLTLSGDPLIVEDPGQPDMQPRVFGKN.

The N-terminal stretch at 1–27 is a signal peptide; that stretch reads MKWHRGRLTQTLGAMGLTATLTVAAQA. 2 consecutive Cytochrome c domains span residues 48–158 and 201–346; these read AMIE…ALWQ and KEAQ…LTLS. Heme c-binding residues include C70, C73, H74, C216, C219, and H220.

In terms of assembly, the iodate reductase (Idr) complex is composed of a molybdopterin-dependent iodate reductase (IdrA and IdrB subunits) and two associated peroxidases (IdrP1 and IdrP2). It depends on heme c as a cofactor.

Its subcellular location is the periplasm. It catalyses the reaction 2 Fe(II)-[cytochrome c] + H2O2 + 2 H(+) = 2 Fe(III)-[cytochrome c] + 2 H2O. In terms of biological role, involved in iodate respiration. Probably reduces the H(2)O(2) produced by IdrA/IdrB to H(2)O, using a reduced cytochrome c as the electron donor. This Pseudomonas sp. (strain SCT) protein is Cytochrome-c peroxidase IdrP2.